The sequence spans 366 residues: Tudor domain-containing protein 10 (366 aa).

Positions 34-107 constitute an RRM domain; the sequence is TEVYVGNLPL…RKLFVNTSKR (74 aa). The Tudor domain maps to 210–317; sequence FWAMHVTEAL…PLTQPFMLEK (108 aa). Residues 216–237 are a coiled coil; that stretch reads TEALHQNMQALFSTLAQAEEQQ.

The chain is Tudor domain-containing protein 10 (TDRD10) from Homo sapiens (Human).